Reading from the N-terminus, the 132-residue chain is Small ribosomal subunit protein uS8 (132 aa).

The protein belongs to the universal ribosomal protein uS8 family. In terms of assembly, part of the 30S ribosomal subunit. Contacts proteins S5 and S12.

Functionally, one of the primary rRNA binding proteins, it binds directly to 16S rRNA central domain where it helps coordinate assembly of the platform of the 30S subunit. This is Small ribosomal subunit protein uS8 from Granulibacter bethesdensis (strain ATCC BAA-1260 / CGDNIH1).